The chain runs to 391 residues: MKLSIALALGATASTGVLAAVVPQQEPLITPQDPPTHHHQEKFLIELAPYQTRWVTEEEKWDLKLDGVNFIDITEERNTGFYPTLHAGSYVHYPPTMKHAEKVVPLLRGLSKDNMEQNLNKFTSFHTRYYRSSTGIESAKWLYSRVSDVIEQSGAAEYGATVEQFAHSWGQFSIIARIPGQTNKTVVLGAHQDSINLFLPSILAAPGADDDGSGTVTILEALRGLLQSDAIVRGNASNTIEFHWYSAEEGGMLGSQAIFSQYKRDKRDIKAMLQQDMTGYTQGALDAGRQEAIGIMVDYVDEGLTQFLKDVTTEYCGIGYIETRCGYACSDHTSASKYGYPAAMATESEMENSNKRIHTTDDSIRYLSFDHMLEHARLTLGFAYELAFAQF.

The first 19 residues, 1–19 (MKLSIALALGATASTGVLA), serve as a signal peptide directing secretion. Positions 20 to 91 (AVVPQQEPLI…YPTLHAGSYV (72 aa)) are excised as a propeptide. N-linked (GlcNAc...) asparagine glycosylation occurs at N183. Zn(2+)-binding residues include H191 and D210. N-linked (GlcNAc...) asparagine glycosylation occurs at N235. Positions 249 and 276 each coordinate Zn(2+). Cysteines 325 and 329 form a disulfide. H358 provides a ligand contact to Zn(2+).

It belongs to the peptidase M28 family. M28E subfamily. In terms of assembly, monomer. The cofactor is Zn(2+).

The protein resides in the secreted. In terms of biological role, extracellular aminopeptidase that allows assimilation of proteinaceous substrates. This Aspergillus niger (strain ATCC MYA-4892 / CBS 513.88 / FGSC A1513) protein is Leucine aminopeptidase 1 (lap1).